The following is a 372-amino-acid chain: Ketol-acid reductoisomerase (NADP(+)) (372 aa).

Positions 1-25 are disordered; it reads MTETKTQTETETDEEEGTDTDTALD. Over residues 10–19 the composition is skewed to acidic residues; it reads TETDEEEGTD. Positions 24–205 constitute a KARI N-terminal Rossmann domain; that stretch reads LDTTIYYDDD…GCTRAGAIET (182 aa). Residues 49–52, Ser-75, Ser-77, and 107–110 each bind NADP(+); these read YGSQ and DTVQ. His-131 is an active-site residue. Position 157 (Gly-157) interacts with NADP(+). The region spanning 206 to 351 is the KARI C-terminal knotted domain; sequence TFREETETDL…EPLRDLFAWS (146 aa). The Mg(2+) site is built by Asp-214, Glu-218, Glu-250, and Glu-254. Ser-275 is a substrate binding site. The segment at 351–372 is disordered; it reads SDNEETNDESDVVSEPEAAADD. The segment covering 352 to 372 has biased composition (acidic residues); sequence DNEETNDESDVVSEPEAAADD.

The protein belongs to the ketol-acid reductoisomerase family. The cofactor is Mg(2+).

The catalysed reaction is (2R)-2,3-dihydroxy-3-methylbutanoate + NADP(+) = (2S)-2-acetolactate + NADPH + H(+). It carries out the reaction (2R,3R)-2,3-dihydroxy-3-methylpentanoate + NADP(+) = (S)-2-ethyl-2-hydroxy-3-oxobutanoate + NADPH + H(+). It participates in amino-acid biosynthesis; L-isoleucine biosynthesis; L-isoleucine from 2-oxobutanoate: step 2/4. Its pathway is amino-acid biosynthesis; L-valine biosynthesis; L-valine from pyruvate: step 2/4. Its function is as follows. Involved in the biosynthesis of branched-chain amino acids (BCAA). Catalyzes an alkyl-migration followed by a ketol-acid reduction of (S)-2-acetolactate (S2AL) to yield (R)-2,3-dihydroxy-isovalerate. In the isomerase reaction, S2AL is rearranged via a Mg-dependent methyl migration to produce 3-hydroxy-3-methyl-2-ketobutyrate (HMKB). In the reductase reaction, this 2-ketoacid undergoes a metal-dependent reduction by NADPH to yield (R)-2,3-dihydroxy-isovalerate. The protein is Ketol-acid reductoisomerase (NADP(+)) of Haloquadratum walsbyi (strain DSM 16790 / HBSQ001).